The chain runs to 834 residues: Dual specificity calcium/calmodulin-dependent 3',5'-cyclic nucleotide phosphodiesterase 1 (834 aa).

The disordered stretch occupies residues 152 to 338 (HSHGRDDQQQ…DELSEVQPDA (187 aa)). The span at 207-222 (THSGPTGPPSNTSSET) shows a compositional bias: low complexity. Over residues 236-252 (TVRESVMEESPSKDPGD) the composition is skewed to basic and acidic residues. Positions 260–301 (STSTLTSQTTTSSSATAEPSAKAAESQAGSAGSSGSCSNPAA) are enriched in low complexity. The segment covering 313 to 322 (WARSMSTNKT) has biased composition (polar residues). Residues 364 to 387 (EKPKFRSVAHAIRAGIFVDRMYRR) are calmodulin-binding. The PDEase domain maps to 392-786 (ALTAFPPDVV…RIWKEQAVKD (395 aa)). The active-site Proton donor is the H469. 4 residues coordinate Zn(2+): H473, H509, D510, and D617. Mg(2+) is bound at residue D510. Disordered regions lie at residues 720–744 (IVIP…AKTT) and 797–834 (EEAA…GAAA). The segment covering 732-741 (DKPRDHRTEA) has biased composition (basic and acidic residues). Residues 823–834 (EPAAEPADGAAA) are compositionally biased toward low complexity.

The protein belongs to the cyclic nucleotide phosphodiesterase family. PDE1 subfamily. It depends on Zn(2+) as a cofactor. Requires Mg(2+) as cofactor. Expressed in the head (at protein level). Expressed in Malpighian tubules. Expressed in neurons in the brain and ventral ganglia with male flies having higher levels of expression in the abdominal ganglia compared to female flies.

It carries out the reaction a nucleoside 3',5'-cyclic phosphate + H2O = a nucleoside 5'-phosphate + H(+). The catalysed reaction is 3',5'-cyclic GMP + H2O = GMP + H(+). The enzyme catalyses 3',5'-cyclic AMP + H2O = AMP + H(+). Its activity is regulated as follows. Type I PDE are activated by the binding of calmodulin in the presence of Ca(2+). Inhibited by zaprinast and sildenafil. Its function is as follows. Cyclic nucleotide phosphodiesterase with a dual specificity for the second messengers cAMP and cGMP, which are key regulators of many important physiological processes. Required for male fertility and male mating behavior. This Drosophila melanogaster (Fruit fly) protein is Dual specificity calcium/calmodulin-dependent 3',5'-cyclic nucleotide phosphodiesterase 1.